The chain runs to 547 residues: Chaperonin GroEL (547 aa).

ATP-binding positions include 29 to 32 (TLGP), lysine 50, 86 to 90 (DGTTT), glycine 414, and aspartate 495. Positions 525-547 (PSDKEDSIPPMRGGMGGMGGMDF) are disordered. Positions 537-547 (GGMGGMGGMDF) are enriched in gly residues.

It belongs to the chaperonin (HSP60) family. As to quaternary structure, forms a cylinder of 14 subunits composed of two heptameric rings stacked back-to-back. Interacts with the co-chaperonin GroES.

The protein resides in the cytoplasm. The catalysed reaction is ATP + H2O + a folded polypeptide = ADP + phosphate + an unfolded polypeptide.. In terms of biological role, together with its co-chaperonin GroES, plays an essential role in assisting protein folding. The GroEL-GroES system forms a nano-cage that allows encapsulation of the non-native substrate proteins and provides a physical environment optimized to promote and accelerate protein folding. This chain is Chaperonin GroEL, found in Rickettsia felis (strain ATCC VR-1525 / URRWXCal2) (Rickettsia azadi).